The chain runs to 155 residues: Protein SprT-like (155 aa).

The 143-residue stretch at 6 to 148 folds into the SprT-like domain; sequence LQRLVERVSL…VCGQCGGKLM (143 aa). Position 67 (His67) interacts with Zn(2+). Glu68 is a catalytic residue. His71 is a Zn(2+) binding site.

It belongs to the SprT family. Zn(2+) serves as cofactor.

Its subcellular location is the cytoplasm. This is Protein SprT-like from Geobacillus sp. (strain WCH70).